The sequence spans 360 residues: Chorismate synthase (360 aa).

Positions 48 and 54 each coordinate NADP(+). FMN is bound by residues 125–127, 246–247, Gly-286, 301–305, and Arg-327; these read RSS, NA, and KPTSS.

This sequence belongs to the chorismate synthase family. In terms of assembly, homotetramer. Requires FMNH2 as cofactor.

The catalysed reaction is 5-O-(1-carboxyvinyl)-3-phosphoshikimate = chorismate + phosphate. It functions in the pathway metabolic intermediate biosynthesis; chorismate biosynthesis; chorismate from D-erythrose 4-phosphate and phosphoenolpyruvate: step 7/7. Catalyzes the anti-1,4-elimination of the C-3 phosphate and the C-6 proR hydrogen from 5-enolpyruvylshikimate-3-phosphate (EPSP) to yield chorismate, which is the branch point compound that serves as the starting substrate for the three terminal pathways of aromatic amino acid biosynthesis. This reaction introduces a second double bond into the aromatic ring system. This Actinobacillus succinogenes (strain ATCC 55618 / DSM 22257 / CCUG 43843 / 130Z) protein is Chorismate synthase.